Consider the following 538-residue polypeptide: Nucleobase-ascorbate transporter 7 (538 aa).

Gly residues predominate over residues 1-11 (MAGGGGGGGGV). The disordered stretch occupies residues 1–20 (MAGGGGGGGGVAPPLKHDGL). Helical transmembrane passes span 45 to 65 (AILLGFQHYLVMLGTTVLIPT), 81 to 101 (MVQTLLFVSGLNTLLQSFFGT), 103 to 123 (LPAVIGGSYTYVPTTLSIILA), 143 to 163 (IQGALIVASILQIVVGFSGLW), 166 to 186 (VVRLLSPLSAVPLVALAGFGL), 191 to 211 (FPLLAKCIEIGLPEIILLLLF), 229 to 249 (FAVIFSVVIVWIYAHLLTVGG), 295 to 315 (FAMMAVSFVSLIESTGTYIVV), 372 to 394 (VVQISAGFMIFFSILGKFGAIFA), 398 to 420 (APVVAALHCLFFAYVGAGGLSLL), 432 to 452 (FILGFSVFMGLSIPQYFNQYT), and 471 to 491 (INVPFSSKAFVAGILAFFLDV).

This sequence belongs to the nucleobase:cation symporter-2 (NCS2) (TC 2.A.40) family. Expressed exclusively in ovules.

It is found in the cell membrane. The polypeptide is Nucleobase-ascorbate transporter 7 (NAT7) (Arabidopsis thaliana (Mouse-ear cress)).